Reading from the N-terminus, the 752-residue chain is Probable GTP-binding protein OBGC1, chloroplastic (752 aa).

Residues 1 to 90 (MAPAVAVVAA…RFPTANPEPR (90 aa)) constitute a chloroplast transit peptide. Residues 19 to 121 (FSAEARRNTK…EEDEVELGLR (103 aa)) are disordered. Basic residues predominate over residues 26–36 (NTKGSRSKRGS). A compositionally biased stretch (acidic residues) spans 103–117 (GDDEEDEEEEEDEVE). Residues 294 to 452 (MRCFDTAKIY…MWIDLELKLV (159 aa)) enclose the Obg domain. The OBG-type G domain maps to 453–621 (ADVGIVGAPN…VVLAAYKVLQ (169 aa)). GTP is bound by residues 459-466 (GAPNAGKS), 484-488 (FTTLL), 506-509 (DLPG), 573-576 (NKMD), and 602-604 (SAM). Residues S466 and T486 each coordinate Mg(2+). An OCT domain is found at 649–728 (ERRAPMNEFE…VGEMEMVWTD (80 aa)). Residues 728 to 752 (DEPSKTRSSKTMNSKDDSVRWPEFG) form a disordered region. The span at 740 to 752 (NSKDDSVRWPEFG) shows a compositional bias: basic and acidic residues.

The protein belongs to the TRAFAC class OBG-HflX-like GTPase superfamily. OBG GTPase family. Requires Mg(2+) as cofactor.

It is found in the plastid. Its subcellular location is the chloroplast. In terms of biological role, probable GTP-binding protein that may play a role in chloroplast development. In Oryza sativa subsp. indica (Rice), this protein is Probable GTP-binding protein OBGC1, chloroplastic (OBGC1).